We begin with the raw amino-acid sequence, 238 residues long: Ribonuclease 3 (238 aa).

Positions 11-136 (RARLEAAIGY…LIAAIYLDGG (126 aa)) constitute an RNase III domain. Glu-49 contacts Mg(2+). Asp-53 is a catalytic residue. Asp-122 and Glu-125 together coordinate Mg(2+). The active site involves Glu-125. The DRBM domain maps to 161 to 230 (DAKTELQEWA…AMKLLEREGV (70 aa)). Residues 180 to 193 (YRTEDRSGPDHDPR) show a composition bias toward basic and acidic residues. The segment at 180–215 (YRTEDRSGPDHDPRFTVTVEVDGIDPETGVDRSKRG) is disordered.

It belongs to the ribonuclease III family. In terms of assembly, homodimer. It depends on Mg(2+) as a cofactor.

The protein localises to the cytoplasm. It catalyses the reaction Endonucleolytic cleavage to 5'-phosphomonoester.. Its function is as follows. Digests double-stranded RNA. Involved in the processing of primary rRNA transcript to yield the immediate precursors to the large and small rRNAs (23S and 16S). Processes some mRNAs, and tRNAs when they are encoded in the rRNA operon. Processes pre-crRNA and tracrRNA of type II CRISPR loci if present in the organism. In Sinorhizobium medicae (strain WSM419) (Ensifer medicae), this protein is Ribonuclease 3.